Reading from the N-terminus, the 157-residue chain is Phosphopantetheine adenylyltransferase (157 aa).

S8 contacts substrate. ATP contacts are provided by residues 8-9 (SF) and H16. Substrate-binding residues include K40, T72, and R86. ATP-binding positions include 87 to 89 (GLR), E97, and 122 to 128 (YSFLSSS).

Belongs to the bacterial CoaD family. Homohexamer. It depends on Mg(2+) as a cofactor.

The protein resides in the cytoplasm. The catalysed reaction is (R)-4'-phosphopantetheine + ATP + H(+) = 3'-dephospho-CoA + diphosphate. Its pathway is cofactor biosynthesis; coenzyme A biosynthesis; CoA from (R)-pantothenate: step 4/5. Reversibly transfers an adenylyl group from ATP to 4'-phosphopantetheine, yielding dephospho-CoA (dPCoA) and pyrophosphate. This Gloeothece citriformis (strain PCC 7424) (Cyanothece sp. (strain PCC 7424)) protein is Phosphopantetheine adenylyltransferase.